Consider the following 363-residue polypeptide: GDSL esterase/lipase At1g29670 (363 aa).

Residues 1–24 (MESYLTKWCVVLVLLCFGFSVVKA) form the signal peptide. Ser39 (nucleophile) is an active-site residue. Catalysis depends on residues Asp327 and His330.

It belongs to the 'GDSL' lipolytic enzyme family.

It localises to the secreted. The protein is GDSL esterase/lipase At1g29670 of Arabidopsis thaliana (Mouse-ear cress).